The following is a 327-amino-acid chain: Zinc transport protein ZntB (327 aa).

Residues 1–273 (MEAIKGSDVN…ARRTYTMSLM (273 aa)) are Cytoplasmic-facing. Residues 274–294 (AMVFLPSTFLTGLFGVNLGGI) form a helical membrane-spanning segment. At 295 to 300 (PGGGWQ) the chain is on the periplasmic side. A helical transmembrane segment spans residues 301-321 (FGFSIFCILLVVLIGGVALWL). The Cytoplasmic segment spans residues 322-327 (YRSKWL).

The protein belongs to the CorA metal ion transporter (MIT) (TC 1.A.35) family.

Its subcellular location is the cell inner membrane. The catalysed reaction is Zn(2+)(out) + H(+)(out) = Zn(2+)(in) + H(+)(in). Functionally, zinc transporter. Acts as a Zn(2+):proton symporter, which likely mediates zinc ion uptake. The sequence is that of Zinc transport protein ZntB from Shigella flexneri serotype 5b (strain 8401).